A 269-amino-acid polypeptide reads, in one-letter code: Proline-rich protein 7 (269 aa).

Residues 1-9 (MVMSQGTYT) lie on the Extracellular side of the membrane. A required for interaction with NMDA receptors region spans residues 1 to 44 (MVMSQGTYTFLTCFAGFWLIWGLIVLLCCFCSFLRRRLKRRQEE). Positions 2–39 (VMSQGTYTFLTCFAGFWLIWGLIVLLCCFCSFLRRRLK) are required for membrane localization. Residues 10–30 (FLTCFAGFWLIWGLIVLLCCF) form a helical; Signal-anchor for type III membrane protein membrane-spanning segment. The Cytoplasmic segment spans residues 31–269 (CSFLRRRLKR…IPLFGRTTAV (239 aa)). Disordered stretches follow at residues 63–83 (GSLAGSPPGLAPPPPPHRSRL) and 97–121 (PLLHHGPAPPHAHPHPHHHALPHPP). Ser-64 is subject to Phosphoserine. Over residues 108–117 (AHPHPHHHAL) the composition is skewed to basic residues. The segment at 146–166 (PCYEEAVLMAEPPPPYSEVLT) is required for internalization. The required for apoptosis induction stretch occupies residues 146 to 269 (PCYEEAVLMA…IPLFGRTTAV (124 aa)). Positions 267–269 (TAV) match the PDZ-binding motif.

Forms a complex with NMDA receptor zeta subunit GRIN1 and epsilon subunit GRIN2B. Interacts with GRIN2B. Interacts with GRIN1; the interaction is reduced upon NMDA receptor activity. Found in a postsynaptic membrane complex with DLG4 and GRIN1. Interacts with DLG4 (via PDZ3 domain and to lesser degree via PDZ2 domain). Interacts with JUN. Found in a complex with JUN and FBXW7. Interacts with JUN and FBXW7; the interaction inhibits ubiquitination-mediated JUN degradation promoting its phosphorylation and transcriptional activity. Interacts with SRC. Palmitoylated. Post-translationally, tyrosine phosphorylated, possibly by SRC. As to expression, highly expressed in brain, moderately expressed in lymph nodes and T cells and low expression in thymus and spleen. Expressed in single positive progenitor thymocytes, particularly in CD8 single positive thymocytes.

It localises to the cell membrane. The protein localises to the postsynaptic cell membrane. It is found in the postsynaptic density membrane. The protein resides in the cytoplasm. Its subcellular location is the perinuclear region. It localises to the synapse. The protein localises to the cell projection. It is found in the dendrite. The protein resides in the nucleus. Its function is as follows. Acts as a synapse-to-nucleus messenger to promote NMDA receptor-mediated excitotoxicity in neurons in a JUN-dependent manner. Inhibits ubiquitination-mediated degradation and promotes phosphorylation and transcriptional activity of transcription factor JUN. Might play a redundant role in the regulation of T cell receptor signaling. Might promote apoptosis in T cells. The chain is Proline-rich protein 7 (Prr7) from Mus musculus (Mouse).